Reading from the N-terminus, the 430-residue chain is Tektin-2 (430 aa).

2 coiled-coil regions span residues 82-160 (LTDL…QAFE) and 273-379 (EKVY…DIAC).

It belongs to the tektin family. As to quaternary structure, microtubule inner protein component of sperm flagellar doublet microtubules. May interact with CCDC172. In terms of processing, tyrosine phosphorylated. Post-translationally, ubiquitinated, leading to its degradation. Deubiquitinated by USP16, promoting its stability.

It is found in the cytoplasm. It localises to the cytoskeleton. Its subcellular location is the cilium axoneme. The protein resides in the flagellum axoneme. The protein localises to the microtubule organizing center. Its function is as follows. Microtubule inner protein (MIP) part of the dynein-decorated doublet microtubules (DMTs) in cilia and flagellar axoneme. Plays a key role in the assembly or attachment of the inner dynein arm to microtubules in sperm flagella and tracheal cilia. Forms filamentous polymers in the walls of ciliary and flagellar microtubules. This is Tektin-2 (TEKT2) from Macaca fascicularis (Crab-eating macaque).